Consider the following 466-residue polypeptide: Ribulose bisphosphate carboxylase large chain (466 aa).

Residue K5 is modified to N6,N6,N6-trimethyllysine. Positions 114 and 164 each coordinate substrate. Residue K166 is the Proton acceptor of the active site. A substrate-binding site is contributed by K168. Residues K192, D194, and E195 each contribute to the Mg(2+) site. K192 carries the post-translational modification N6-carboxylysine. H285 (proton acceptor) is an active-site residue. Residues R286, H318, and S370 each contribute to the substrate site.

The protein belongs to the RuBisCO large chain family. Type I subfamily. Heterohexadecamer of 8 large chains and 8 small chains; disulfide-linked. The disulfide link is formed within the large subunit homodimers. Mg(2+) serves as cofactor. The disulfide bond which can form in the large chain dimeric partners within the hexadecamer appears to be associated with oxidative stress and protein turnover.

It localises to the plastid. The protein resides in the chloroplast. The enzyme catalyses 2 (2R)-3-phosphoglycerate + 2 H(+) = D-ribulose 1,5-bisphosphate + CO2 + H2O. It catalyses the reaction D-ribulose 1,5-bisphosphate + O2 = 2-phosphoglycolate + (2R)-3-phosphoglycerate + 2 H(+). Its function is as follows. RuBisCO catalyzes two reactions: the carboxylation of D-ribulose 1,5-bisphosphate, the primary event in carbon dioxide fixation, as well as the oxidative fragmentation of the pentose substrate in the photorespiration process. Both reactions occur simultaneously and in competition at the same active site. This chain is Ribulose bisphosphate carboxylase large chain, found in Caltha palustris (Yellow marsh marigold).